Consider the following 218-residue polypeptide: CD99 antigen-like protein 2 (218 aa).

An N-terminal signal peptide occupies residues 1 to 25 (MVAWRSAFLVCLAFSLATLVQRGSG). The Extracellular segment spans residues 26–136 (DFDDFNLKDA…PGSGMVAETG (111 aa)). The tract at residues 72–128 (LADALDDRNDRDDGRRKPIAGGGGFSDKDLEDIVGGGEYKPDKGKGDGRYGSNDDPG) is disordered. 2 stretches are compositionally biased toward basic and acidic residues: residues 76 to 87 (LDDRNDRDDGRR) and 110 to 119 (YKPDKGKGDG). Residue serine 129 is glycosylated (O-linked (Xyl...) (chondroitin sulfate) serine). Residues 137–157 (TIAGVASALAMALIGAVSSYI) form a helical membrane-spanning segment. Over 158 to 218 (SYQQKKFCFS…EPPPSEPARI (61 aa)) the chain is Cytoplasmic.

It belongs to the CD99 family. In terms of processing, O-glycosylated.

It is found in the cell membrane. Its subcellular location is the cell junction. The protein localises to the secreted. Functionally, plays a role in a late step of leukocyte extravasation helping cells to overcome the endothelial basement membrane. Acts at the same site as, but independently of, PECAM1. Homophilic adhesion molecule, but these interactions may not be required for cell aggregation. The chain is CD99 antigen-like protein 2 (CD99L2) from Pongo abelii (Sumatran orangutan).